Consider the following 215-residue polypeptide: Cytochrome b6 (215 aa).

Residues 32–52 (IFYCLGGITLTCFLVQVATGF) form a helical membrane-spanning segment. Cys35 lines the heme c pocket. Heme b is bound by residues His86 and His100. Helical transmembrane passes span 90–110 (ASMM…TGGF), 116–136 (LTWV…VTGY), and 186–206 (LHTF…FPMI). Heme b-binding residues include His187 and His202.

This sequence belongs to the cytochrome b family. PetB subfamily. As to quaternary structure, the 4 large subunits of the cytochrome b6-f complex are cytochrome b6, subunit IV (17 kDa polypeptide, PetD), cytochrome f and the Rieske protein, while the 4 small subunits are PetG, PetL, PetM and PetN. The complex functions as a dimer. Heme b serves as cofactor. It depends on heme c as a cofactor.

It is found in the plastid. The protein resides in the chloroplast thylakoid membrane. Functionally, component of the cytochrome b6-f complex, which mediates electron transfer between photosystem II (PSII) and photosystem I (PSI), cyclic electron flow around PSI, and state transitions. The polypeptide is Cytochrome b6 (Cucumis sativus (Cucumber)).